We begin with the raw amino-acid sequence, 132 residues long: Sec-independent protein translocase protein TatB (132 aa).

The chain crosses the membrane as a helical span at residues 1-21; the sequence is MFDIGFWELVLISVVGLVVLG. Residues 70 to 132 form a disordered region; it reads GMEDLSPELK…KVSAADKKAE (63 aa). Basic and acidic residues-rich tracts occupy residues 96–108 and 115–132; these read YADK…ETAK and SAEK…KKAE.

It belongs to the TatB family. The Tat system comprises two distinct complexes: a TatABC complex, containing multiple copies of TatA, TatB and TatC subunits, and a separate TatA complex, containing only TatA subunits. Substrates initially bind to the TatABC complex, which probably triggers association of the separate TatA complex to form the active translocon.

It localises to the cell inner membrane. Part of the twin-arginine translocation (Tat) system that transports large folded proteins containing a characteristic twin-arginine motif in their signal peptide across membranes. Together with TatC, TatB is part of a receptor directly interacting with Tat signal peptides. TatB may form an oligomeric binding site that transiently accommodates folded Tat precursor proteins before their translocation. The sequence is that of Sec-independent protein translocase protein TatB from Vibrio parahaemolyticus serotype O3:K6 (strain RIMD 2210633).